The sequence spans 578 residues: E3 ubiquitin protein ligase RIN2 (578 aa).

6 helical membrane passes run 6-26 (LPVS…WTEL), 58-78 (FTIA…VLSL), 111-131 (LVIP…TVLC), 161-181 (VYSV…LSLM), 186-206 (IGSA…FETL), and 272-292 (YLHI…VLFL). An RING-type; atypical zinc finger spans residues 337–379 (CAICREPMAKAKRLHCNHLFHLGCLRSWLDQGLNEVYSCPTCR). The span at 504 to 513 (QASTSSTTVP) shows a compositional bias: polar residues. The segment at 504-524 (QASTSSTTVPPGNGGRTGGLH) is disordered. Residues 538 to 578 (NILAMAETVREVMPHVPDEIIFQDLQRTNSVAVTVNNLLQM) form the CUE domain.

In terms of assembly, interacts (via C-terminus) with RPM1 (via N-terminus).

The protein localises to the membrane. It catalyses the reaction S-ubiquitinyl-[E2 ubiquitin-conjugating enzyme]-L-cysteine + [acceptor protein]-L-lysine = [E2 ubiquitin-conjugating enzyme]-L-cysteine + N(6)-ubiquitinyl-[acceptor protein]-L-lysine.. Its pathway is protein modification; protein ubiquitination. In terms of biological role, E3 ubiquitin protein ligase that acts as a positive regulator of RPM1- and RPS2-dependent hypersensitive response (HR), in association with RIN3. Probably not required for RPM1 degradation during HR. The polypeptide is E3 ubiquitin protein ligase RIN2 (RIN2) (Arabidopsis thaliana (Mouse-ear cress)).